Consider the following 377-residue polypeptide: RNA polymerase sigma factor SigA (377 aa).

The interval 72-92 (EVSNLRQGEDHDGNDNDDFNF) is disordered. The sigma-70 factor domain-2 stretch occupies residues 144-214 (LAEANLRLVV…TRAIADQART (71 aa)). The short motif at 168–171 (DLIQ) is the Interaction with polymerase core subunit RpoC element. Residues 223–299 (ETINKLIRVS…DQEALTPADA (77 aa)) form a sigma-70 factor domain-3 region. The interval 312 to 365 (VLDTLTEREENVLRLRFGLDDGRTRTLEEVGKVFGVTRERIRQIEAKALRKLRH) is sigma-70 factor domain-4. The segment at residues 338-357 (LEEVGKVFGVTRERIRQIEA) is a DNA-binding region (H-T-H motif).

The protein belongs to the sigma-70 factor family. RpoD/SigA subfamily. In terms of assembly, interacts transiently with the RNA polymerase catalytic core.

The protein resides in the cytoplasm. Its function is as follows. Sigma factors are initiation factors that promote the attachment of RNA polymerase to specific initiation sites and are then released. This sigma factor is the primary sigma factor during exponential growth. The polypeptide is RNA polymerase sigma factor SigA (Bacillus sp).